We begin with the raw amino-acid sequence, 361 residues long: MGYISMSVVAFLVVFASPVVLATDTDPIPENRAQIPQWFKTNVKPYSQRKGTLDPALEAAEAARQIITVNQKGGANFKTLNEAIKSIPTGNKNRVIIKLAPGVYNEKVTIDIARPFITLLGQPGAETVLTYHGTAAQYGTVESATLIVWAEYFQAAHLTIKNTAPMPKPGSQGQALAMRINADKAAFYSCRFHGFQDTLCDDKGNHFFKDCYIEGTYDFIFGRGASLYLNTQLHAVGDGLRVITAQGRQSATEQNGYTFVHCKVTGTGTGIYLGRSWMSHPKVVYAFTEMTSVVNPSGWRENLNRGYDKTVFYGEYKCFGPGSHLEKRVPYTQDIDKNEVTPFLTLGYIKGSTWLLPPPKY.

The first 22 residues, 1-22 (MGYISMSVVAFLVVFASPVVLA), serve as a signal peptide directing secretion. Gln174 lines the substrate pocket. Asp197 (proton donor) is an active-site residue. Asp218 acts as the Nucleophile in catalysis. 2 residues coordinate substrate: Arg275 and Trp277.

This sequence belongs to the pectinesterase family. Expressed in flower buds.

The protein resides in the secreted. The protein localises to the cell wall. It carries out the reaction [(1-&gt;4)-alpha-D-galacturonosyl methyl ester](n) + n H2O = [(1-&gt;4)-alpha-D-galacturonosyl](n) + n methanol + n H(+). It participates in glycan metabolism; pectin degradation; 2-dehydro-3-deoxy-D-gluconate from pectin: step 1/5. Acts in the modification of cell walls via demethylesterification of cell wall pectin. This is Probable pectinesterase 50 (PME50) from Arabidopsis thaliana (Mouse-ear cress).